The following is a 144-amino-acid chain: Granulocyte-macrophage colony-stimulating factor (144 aa).

The signal sequence occupies residues 1–17; sequence MWLQNLLFLGTVVCSIS. A glycan (O-linked (GalNAc...) serine) is linked at serine 22. Threonine 27 carries an O-linked (GalNAc...) threonine glycan. Asparagine 44 carries N-linked (GlcNAc...) asparagine glycosylation. 2 disulfide bridges follow: cysteine 71–cysteine 113 and cysteine 105–cysteine 138.

The protein belongs to the GM-CSF family. As to quaternary structure, monomer. The signaling GM-CSF receptor complex is a dodecamer of two head-to-head hexamers of two alpha, two beta, and two ligand subunits.

The protein resides in the secreted. Its function is as follows. Cytokine that stimulates the growth and differentiation of hematopoietic precursor cells from various lineages, including granulocytes, macrophages, eosinophils and erythrocytes. This chain is Granulocyte-macrophage colony-stimulating factor (CSF2), found in Canis lupus familiaris (Dog).